The sequence spans 346 residues: tRNA N6-adenosine threonylcarbamoyltransferase (346 aa).

Fe cation-binding residues include His-111 and His-115. Residues 134-138 (LVSGG), Asp-167, Gly-180, Asp-184, and Asn-279 contribute to the substrate site. Residue Asp-307 coordinates Fe cation.

The protein belongs to the KAE1 / TsaD family. It depends on Fe(2+) as a cofactor.

It localises to the cytoplasm. The catalysed reaction is L-threonylcarbamoyladenylate + adenosine(37) in tRNA = N(6)-L-threonylcarbamoyladenosine(37) in tRNA + AMP + H(+). In terms of biological role, required for the formation of a threonylcarbamoyl group on adenosine at position 37 (t(6)A37) in tRNAs that read codons beginning with adenine. Is involved in the transfer of the threonylcarbamoyl moiety of threonylcarbamoyl-AMP (TC-AMP) to the N6 group of A37, together with TsaE and TsaB. TsaD likely plays a direct catalytic role in this reaction. This Trichormus variabilis (strain ATCC 29413 / PCC 7937) (Anabaena variabilis) protein is tRNA N6-adenosine threonylcarbamoyltransferase.